The sequence spans 408 residues: Serine/threonine transporter SstT (408 aa).

9 helical membrane passes run 11 to 31 (LANG…VSLA), 43 to 63 (FLGS…VFIL), 82 to 102 (IVVL…LLSM), 141 to 161 (ALMT…GLAL), 192 to 212 (IGIF…AIAG), 216 to 236 (LLAV…PLIV), 290 to 310 (IPLG…VLTL), 316 to 336 (LGIQ…AISA), and 363 to 383 (VAMQ…AAET).

It belongs to the dicarboxylate/amino acid:cation symporter (DAACS) (TC 2.A.23) family.

The protein resides in the cell inner membrane. It catalyses the reaction L-serine(in) + Na(+)(in) = L-serine(out) + Na(+)(out). The catalysed reaction is L-threonine(in) + Na(+)(in) = L-threonine(out) + Na(+)(out). Functionally, involved in the import of serine and threonine into the cell, with the concomitant import of sodium (symport system). The chain is Serine/threonine transporter SstT from Shewanella sp. (strain MR-4).